Reading from the N-terminus, the 348-residue chain is Ion-translocating oxidoreductase complex subunit D (348 aa).

3 consecutive transmembrane segments (helical) span residues 20-39, 67-87, and 124-144; these read VMRL…CYLF, YVVS…LIAV, and AMVG…NWMA. Position 187 is an FMN phosphoryl threonine (Thr-187). A run of 4 helical transmembrane segments spans residues 221-241, 244-264, 266-286, and 300-320; these read WINL…LIPW, PVAM…LAPA, FAMP…FFII, and LVFG…GGYP.

It belongs to the NqrB/RnfD family. As to quaternary structure, the complex is composed of six subunits: RnfA, RnfB, RnfC, RnfD, RnfE and RnfG. Requires FMN as cofactor.

It localises to the cell inner membrane. Functionally, part of a membrane-bound complex that couples electron transfer with translocation of ions across the membrane. In Tolumonas auensis (strain DSM 9187 / NBRC 110442 / TA 4), this protein is Ion-translocating oxidoreductase complex subunit D.